Reading from the N-terminus, the 215-residue chain is Large ribosomal subunit protein uL4 (215 aa).

Residues 46–72 are disordered; sequence TAKSKNRAEVSGGGRKPWAQKGGGRAR. Positions 56–71 are enriched in gly residues; sequence SGGGRKPWAQKGGGRA.

It belongs to the universal ribosomal protein uL4 family. In terms of assembly, part of the 50S ribosomal subunit.

Functionally, one of the primary rRNA binding proteins, this protein initially binds near the 5'-end of the 23S rRNA. It is important during the early stages of 50S assembly. It makes multiple contacts with different domains of the 23S rRNA in the assembled 50S subunit and ribosome. Its function is as follows. Forms part of the polypeptide exit tunnel. This chain is Large ribosomal subunit protein uL4, found in Helicobacter pylori (strain ATCC 700392 / 26695) (Campylobacter pylori).